The following is a 244-amino-acid chain: Phosphoadenosine 5'-phosphosulfate reductase (244 aa).

Residue cysteine 239 is the Nucleophile; cysteine thiosulfonate intermediate of the active site.

It belongs to the PAPS reductase family. CysH subfamily.

Its subcellular location is the cytoplasm. The catalysed reaction is [thioredoxin]-disulfide + sulfite + adenosine 3',5'-bisphosphate + 2 H(+) = [thioredoxin]-dithiol + 3'-phosphoadenylyl sulfate. The protein operates within sulfur metabolism; hydrogen sulfide biosynthesis; sulfite from sulfate: step 3/3. In terms of biological role, catalyzes the formation of sulfite from phosphoadenosine 5'-phosphosulfate (PAPS) using thioredoxin as an electron donor. This chain is Phosphoadenosine 5'-phosphosulfate reductase, found in Serratia proteamaculans (strain 568).